Here is a 280-residue protein sequence, read N- to C-terminus: MGLVKPKKFLGQHFLKDLSIAKDIADTVDVCPDLPILEVGPGMGVLTQFIMQKNRPVKVVELDYESVAYLRENFPALEDNIIEDDFLKLNLEKLFDGKPFVLTGNYPYNISSQIFFKMLDYKDLIPCCTGMIQKEVAERIAAGPGSKTYGILSILIQAWYKVEYLFTVHEHVFNPPPKVKSAVIRMTRNETTELGCNEKLFKLIVKTTFNQRRKTLRNSISSILDKENPLSADPIFNKRPEQLSVQEFIELTNQVEAALKNKTDIVYSNDIARKGTNKKE.

Residues His13, Leu15, Gly40, Glu61, Asp85, and Asn105 each contribute to the S-adenosyl-L-methionine site.

This sequence belongs to the class I-like SAM-binding methyltransferase superfamily. rRNA adenine N(6)-methyltransferase family. RsmA subfamily.

Its subcellular location is the cytoplasm. It catalyses the reaction adenosine(1518)/adenosine(1519) in 16S rRNA + 4 S-adenosyl-L-methionine = N(6)-dimethyladenosine(1518)/N(6)-dimethyladenosine(1519) in 16S rRNA + 4 S-adenosyl-L-homocysteine + 4 H(+). Its function is as follows. Specifically dimethylates two adjacent adenosines (A1518 and A1519) in the loop of a conserved hairpin near the 3'-end of 16S rRNA in the 30S particle. May play a critical role in biogenesis of 30S subunits. The protein is Ribosomal RNA small subunit methyltransferase A of Phocaeicola vulgatus (strain ATCC 8482 / DSM 1447 / JCM 5826 / CCUG 4940 / NBRC 14291 / NCTC 11154) (Bacteroides vulgatus).